Here is a 789-residue protein sequence, read N- to C-terminus: Trimethylamine-oxide aldolase (789 aa).

It in the C-terminal section; belongs to the GcvT family.

The enzyme catalyses trimethylamine N-oxide + H(+) = dimethylamine + formaldehyde. Its function is as follows. Catalyzes the conversion of trimethylamine N-oxide (TMAO) to dimethylamine (DMA) and formaldehyde. The sequence is that of Trimethylamine-oxide aldolase from Ruegeria pomeroyi (strain ATCC 700808 / DSM 15171 / DSS-3) (Silicibacter pomeroyi).